Consider the following 412-residue polypeptide: UPF0761 membrane protein LPC_2650 (412 aa).

A run of 6 helical transmembrane segments spans residues 36–56, 99–119, 137–157, 177–197, 210–230, and 241–261; these read ALAFTSLLAVVPLMSVGLAIF, LSIWGVVFLIFTALLVMFTIE, AFLLYWAIISLAPVLLGLSLA, ILHYSPFFLSLIGFTFLYVVV, GGLVAAILFESAKHAFAYYLI, and AFATVPIFFIWVYWVWIITLL.

The protein belongs to the UPF0761 family.

Its subcellular location is the cell inner membrane. This Legionella pneumophila (strain Corby) protein is UPF0761 membrane protein LPC_2650.